We begin with the raw amino-acid sequence, 957 residues long: Exoribonuclease II, mitochondrial (957 aa).

The transit peptide at Met-1 to Ile-54 directs the protein to the mitochondrion. An RNB domain is found at Arg-503–Leu-843.

Belongs to the RNR ribonuclease family.

Its subcellular location is the mitochondrion. It carries out the reaction Exonucleolytic cleavage in the 3'- to 5'-direction to yield nucleoside 5'-phosphates.. Its function is as follows. Required for intron-independent turnover and processing of mitochondrial RNA. Participates in 3'-mtRNA processing where it hydrolyzes single-stranded RNA or partially double-stranded RNA with 3'-single-stranded tails. This is Exoribonuclease II, mitochondrial (rpm1) from Schizosaccharomyces pombe (strain 972 / ATCC 24843) (Fission yeast).